The chain runs to 294 residues: tRNA dimethylallyltransferase (294 aa).

9–16 serves as a coordination point for ATP; sequence GPTASGKS. A substrate-binding site is contributed by 11–16; the sequence is TASGKS. The interval 155–159 is interaction with substrate tRNA; it reads QRVIR.

The protein belongs to the IPP transferase family. Monomer. Mg(2+) serves as cofactor.

The enzyme catalyses adenosine(37) in tRNA + dimethylallyl diphosphate = N(6)-dimethylallyladenosine(37) in tRNA + diphosphate. Functionally, catalyzes the transfer of a dimethylallyl group onto the adenine at position 37 in tRNAs that read codons beginning with uridine, leading to the formation of N6-(dimethylallyl)adenosine (i(6)A). This chain is tRNA dimethylallyltransferase, found in Leuconostoc citreum (strain KM20).